We begin with the raw amino-acid sequence, 606 residues long: Diphthine--ammonia ligase (606 aa).

It in the N-terminal section; belongs to the Diphthine--ammonia ligase family. The protein in the C-terminal section; belongs to the RutC family.

The protein localises to the cytoplasm. It is found in the nucleus. The enzyme catalyses diphthine-[translation elongation factor 2] + NH4(+) + ATP = diphthamide-[translation elongation factor 2] + AMP + diphosphate + H(+). The protein operates within protein modification; peptidyl-diphthamide biosynthesis. Amidase that catalyzes the last step of diphthamide biosynthesis using ammonium and ATP. Diphthamide biosynthesis consists in the conversion of an L-histidine residue in the translation elongation factor eEF-2 (eft201 or eft202) to diphthamide. Has a role in meiosis. The sequence is that of Diphthine--ammonia ligase (mug71) from Schizosaccharomyces pombe (strain 972 / ATCC 24843) (Fission yeast).